A 102-amino-acid polypeptide reads, in one-letter code: MEQTEEHTDTHTDEQDEAVDRNDRKERIGVVESAKMDKTITVSVRRQMKHPMYGKYLERSSTFMAHDEGDEANEGDTVRIMETRPISKNKRWRLVEIIERAK.

A disordered region spans residues 1 to 27; it reads MEQTEEHTDTHTDEQDEAVDRNDRKER.

This sequence belongs to the universal ribosomal protein uS17 family. Part of the 30S ribosomal subunit.

Functionally, one of the primary rRNA binding proteins, it binds specifically to the 5'-end of 16S ribosomal RNA. This is Small ribosomal subunit protein uS17 from Salinibacter ruber (strain DSM 13855 / M31).